The primary structure comprises 327 residues: uncharacterized protein (327 aa).

Over 1-19 the chain is Cytoplasmic; the sequence is MSIAQDRGIVFKLLSIYRA. The helical transmembrane segment at 20–40 threads the bilayer; sequence AAGIFMALAQLIVIFFGYCDF. The Extracellular segment spans residues 41 to 51; that stretch reads KIKGYRIASYN. A helical transmembrane segment spans residues 52–72; that stretch reads APTFASSFIILAVCLLLVVVL. Residues 73–104 are Cytoplasmic-facing; that stretch reads ENPEVKVTNSENSLFSALKQFFRVERKKLISC. Residues 105-125 form a helical membrane-spanning segment; that stretch reads LILLWSMFLSSFIMSEVVYFM. Residues 126-141 are Extracellular-facing; sequence PLFLTLHVNWDTKFQG. Residues 142–162 traverse the membrane as a helical segment; that stretch reads IAFMVASILGVTGSYFAPKLI. Residues 163–199 lie on the Cytoplasmic side of the membrane; it reads NVGCSCGRAKDGGLEESDTTGSETVEVKKKDSLYSGQ. Residues 200–220 traverse the membrane as a helical segment; it reads VFLSIFALFVSLLGQAFMIGA. Topologically, residues 221–235 are extracellular; that stretch reads SEALKHKSMPPTNSG. The chain crosses the membrane as a helical span at residues 236–256; it reads IFFSAGMSITLLGYNFLASSI. The Cytoplasmic portion of the chain corresponds to 257–275; that stretch reads PALFSMYIDPKLKVQLMPS. The helical transmembrane segment at 276-296 threads the bilayer; the sequence is IGAISGIGKLVAPIVLAALYG. Topologically, residues 297–300 are extracellular; it reads TRLG. A helical membrane pass occupies residues 301 to 321; the sequence is LSIAVGFGMILVAVSIPPLIW. Topologically, residues 322-327 are cytoplasmic; the sequence is LRKKRC.

It localises to the membrane. This is an uncharacterized protein from Saccharomyces cerevisiae (strain ATCC 204508 / S288c) (Baker's yeast).